Consider the following 280-residue polypeptide: Cobalt import ATP-binding protein CbiO (280 aa).

The ABC transporter domain maps to Ile2–Gly236. Gly36–Thr43 provides a ligand contact to ATP.

Belongs to the ABC transporter superfamily. Cobalt importer (TC 3.A.1.18.1) family. As to quaternary structure, forms an energy-coupling factor (ECF) transporter complex composed of an ATP-binding protein (A component, CbiO), a transmembrane protein (T component, CbiQ) and 2 possible substrate-capture proteins (S components, CbiM and CbiN) of unknown stoichimetry.

Its subcellular location is the cell inner membrane. It participates in cofactor biosynthesis; adenosylcobalamin biosynthesis. Functionally, part of the energy-coupling factor (ECF) transporter complex CbiMNOQ involved in cobalt import. Presumably responsible for energy coupling to the transport system. This Syntrophus aciditrophicus (strain SB) protein is Cobalt import ATP-binding protein CbiO.